Here is a 686-residue protein sequence, read N- to C-terminus: Protein MxiA (686 aa).

The next 6 helical transmembrane spans lie at 28 to 52 (LIIP…ILVF), 105 to 129 (FVIG…FIVI), 197 to 216 (AIAG…SVGM), 232 to 256 (ILTI…GFIV), 274 to 292 (IFGN…LAIG), and 299 to 315 (FFVF…LFYY).

This sequence belongs to the FHIPEP (flagella/HR/invasion proteins export pore) family.

The protein localises to the cell inner membrane. Necessary for the secretion of IPA invasins. This Shigella flexneri protein is Protein MxiA (mxiA).